A 157-amino-acid polypeptide reads, in one-letter code: Protein PEROXIN-4 (157 aa).

The region spanning 3-153 (ASRARLFKEY…AQMYTRLAAM (151 aa)) is the UBC core domain. The active-site Glycyl thioester intermediate is the C90.

Belongs to the ubiquitin-conjugating enzyme family. In terms of assembly, interacts with PEX22.

It localises to the peroxisome membrane. It carries out the reaction S-ubiquitinyl-[E1 ubiquitin-activating enzyme]-L-cysteine + [E2 ubiquitin-conjugating enzyme]-L-cysteine = [E1 ubiquitin-activating enzyme]-L-cysteine + S-ubiquitinyl-[E2 ubiquitin-conjugating enzyme]-L-cysteine.. It participates in protein modification; protein ubiquitination. In terms of biological role, required for peroxisome biogenesis. Necessary for the developmental elimination of obsolete peroxisome matrix proteins. May be involved in the ubiquitination of PEX5, targeting it for recycling. Accepts the ubiquitin from the E1 complex and catalyzes its covalent attachment to other proteins. The sequence is that of Protein PEROXIN-4 (PEX4) from Arabidopsis thaliana (Mouse-ear cress).